We begin with the raw amino-acid sequence, 315 residues long: tRNA dimethylallyltransferase (315 aa).

An ATP-binding site is contributed by 14-21 (GPTASGKT). A substrate-binding site is contributed by 16 to 21 (TASGKT). Interaction with substrate tRNA stretches follow at residues 39 to 42 (DSAL), 163 to 167 (QRIQR), and 248 to 253 (RCVGYR).

Belongs to the IPP transferase family. As to quaternary structure, monomer. Requires Mg(2+) as cofactor.

The catalysed reaction is adenosine(37) in tRNA + dimethylallyl diphosphate = N(6)-dimethylallyladenosine(37) in tRNA + diphosphate. Catalyzes the transfer of a dimethylallyl group onto the adenine at position 37 in tRNAs that read codons beginning with uridine, leading to the formation of N6-(dimethylallyl)adenosine (i(6)A). The sequence is that of tRNA dimethylallyltransferase from Paraburkholderia phytofirmans (strain DSM 17436 / LMG 22146 / PsJN) (Burkholderia phytofirmans).